The sequence spans 87 residues: Small ribosomal subunit protein bS20 (87 aa).

Positions 1–11 (MANIKSKKKRI) are enriched in basic residues. Residues 1-25 (MANIKSKKKRIKTNEKARQRNKAIR) are disordered.

The protein belongs to the bacterial ribosomal protein bS20 family.

Binds directly to 16S ribosomal RNA. In Corynebacterium kroppenstedtii (strain DSM 44385 / JCM 11950 / CIP 105744 / CCUG 35717), this protein is Small ribosomal subunit protein bS20.